The sequence spans 359 residues: Zinc finger CCCH domain-containing protein 20 (359 aa).

3 consecutive C3H1-type zinc fingers follow at residues 75–107 (TCDHFRMYEFKVRRCARGRSHDWTECPYAHPGE), 119–145 (YSGTACPEFRKGCCKRGDACEFSHGVF), and 153–177 (RYRTQPCKDGGNCRRRVCFFAHSPD). 2 disordered regions span residues 207–226 (SISPSSNSPPVSPRGDSDSS) and 334–359 (MGRIEPDPDQGAGDTPDVGWVSDLVM).

This Arabidopsis thaliana (Mouse-ear cress) protein is Zinc finger CCCH domain-containing protein 20.